Here is a 360-residue protein sequence, read N- to C-terminus: Dual-specificity RNA methyltransferase RlmN (360 aa).

E91 (proton acceptor) is an active-site residue. The region spanning 110-343 (RSEKYTVCIS…CTIRESKGLD (234 aa)) is the Radical SAM core domain. Cysteines 117 and 348 form a disulfide. Positions 124, 128, and 131 each coordinate [4Fe-4S] cluster. S-adenosyl-L-methionine contacts are provided by residues 174 to 175 (GE), S206, 229 to 231 (SLH), and N305. The S-methylcysteine intermediate role is filled by C348.

Belongs to the radical SAM superfamily. RlmN family. [4Fe-4S] cluster is required as a cofactor.

The protein resides in the cytoplasm. The catalysed reaction is adenosine(2503) in 23S rRNA + 2 reduced [2Fe-2S]-[ferredoxin] + 2 S-adenosyl-L-methionine = 2-methyladenosine(2503) in 23S rRNA + 5'-deoxyadenosine + L-methionine + 2 oxidized [2Fe-2S]-[ferredoxin] + S-adenosyl-L-homocysteine. It carries out the reaction adenosine(37) in tRNA + 2 reduced [2Fe-2S]-[ferredoxin] + 2 S-adenosyl-L-methionine = 2-methyladenosine(37) in tRNA + 5'-deoxyadenosine + L-methionine + 2 oxidized [2Fe-2S]-[ferredoxin] + S-adenosyl-L-homocysteine. In terms of biological role, specifically methylates position 2 of adenine 2503 in 23S rRNA and position 2 of adenine 37 in tRNAs. m2A2503 modification seems to play a crucial role in the proofreading step occurring at the peptidyl transferase center and thus would serve to optimize ribosomal fidelity. The sequence is that of Dual-specificity RNA methyltransferase RlmN from Aliarcobacter butzleri (strain RM4018) (Arcobacter butzleri).